The following is a 116-amino-acid chain: Large ribosomal subunit protein uL18 (116 aa).

This sequence belongs to the universal ribosomal protein uL18 family. Part of the 50S ribosomal subunit; part of the 5S rRNA/L5/L18/L25 subcomplex. Contacts the 5S and 23S rRNAs.

This is one of the proteins that bind and probably mediate the attachment of the 5S RNA into the large ribosomal subunit, where it forms part of the central protuberance. The protein is Large ribosomal subunit protein uL18 of Hahella chejuensis (strain KCTC 2396).